The following is a 572-amino-acid chain: Hsp70-Hsp90 organizing protein 1 (572 aa).

TPR repeat units lie at residues 2-35, 37-69, and 70-103; these read AEEAKAKGNAAFSSGDFTTAINHFTEAIALAPTN, VLFSNRSAAHASLHQYAEALSDAKETIKLKPYW, and PKGYSRLGAAHLGLNQFELAVTAYKKGLDVDPTN. The 40-residue stretch at 133–172 folds into the STI1 1 domain; sequence GPEMWTKLTSDPSTRGFLQQPDFVNMMQEIQKNPSSLNLY. Ser167 carries the phosphoserine modification. The interval 189–248 is disordered; it reads KFRPPPPQGDEAEVPESDMGQSSSNEPEVEKKREPEPEPEPEVTEEKEKKERKEKAKKEK. The segment covering 232-248 has biased composition (basic and acidic residues); the sequence is TEEKEKKERKEKAKKEK. Positions 241 to 258 match the Bipartite nuclear localization signal motif; it reads KEKAKKEKELGNAAYKKK. TPR repeat units follow at residues 244–277, 279–311, 319–356, 358–382, 383–416, 418–450, and 451–484; these read AKKEKELGNAAYKKKDFETAIQHYSTAIEIDDED, SYLTNRAAVYLEMGKYNECIEDCNKAVERGREL, ARALTRKGTALTKMAKCSKDYEPAIEAFQKALTEHRNP, TLKRLNDAERAKKEWEQKQYFDPKL, GDEEREKGNDFFKEQKYPEAIKHYTEAIKRNPND, KAYSNRAASYTKLGAMPEGLKDAEKCIELDPTF, and SKGYSRKAAVQFFLKEYDNAMETYQAGLEHDPSN. Residues 521–560 form the STI1 2 domain; the sequence is DPEIQNILTDPVMRQVLSDLQENPSAAQKHMQNPMVMNKI.

As to quaternary structure, co-chaperone that forms a complex with HSP70 and HSP90 and preproteins (e.g. chloroplast preproteins). Post-translationally, phosphorylated. In terms of processing, acetylated.

The protein resides in the cytoplasm. It localises to the nucleus. In terms of biological role, mediates the association of the molecular chaperones HSP70 and HSP90. Mediates nuclear encoded chloroplast preproteins binding to HSP90 prior to chloroplastic sorting. In Arabidopsis thaliana (Mouse-ear cress), this protein is Hsp70-Hsp90 organizing protein 1 (HOP1).